The chain runs to 331 residues: MATPHHSRRGSMAYYPRVRAKSIEPRIRSWPEISGPVKVQGFAGFKVGMTHVEMVDYRKTSVTAGQPIFVPVTVIEVPPLDVIGIRLYDEDEEGNMVVVYEKWTQNLDKELFKKITTFKEVKEKPVPETYADVRLIVATRNKDVPGIPSKKPEIFELRIGGGNSVKERFEYATAHLGKTIRFEDFSKPGKFVDVLSVTKGKGFTGHVQRFGVKLLPRKNRKHRRMIGTLGPWHPDWVRNTVPQAGQMGYQQRTISNVRVLKYSKGEDADTINVRGGFLHYGLVKNDYVLLFGSVPGPAKRLIKMRDPARQKVPDIDNVKLDYISLESKQGD.

It belongs to the universal ribosomal protein uL3 family. As to quaternary structure, part of the 50S ribosomal subunit. Forms a cluster with proteins L14 and L24e.

One of the primary rRNA binding proteins, it binds directly near the 3'-end of the 23S rRNA, where it nucleates assembly of the 50S subunit. The protein is Large ribosomal subunit protein uL3 of Thermoplasma volcanium (strain ATCC 51530 / DSM 4299 / JCM 9571 / NBRC 15438 / GSS1).